The following is a 193-amino-acid chain: dITP/XTP pyrophosphatase (193 aa).

Substrate is bound at residue 7 to 12 (SENENK). The active-site Proton acceptor is the D65. Residue D65 coordinates Mg(2+). Residues S66, 144-147 (FGYD), K167, and 172-173 (HR) contribute to the substrate site.

The protein belongs to the HAM1 NTPase family. As to quaternary structure, homodimer. It depends on Mg(2+) as a cofactor.

It catalyses the reaction XTP + H2O = XMP + diphosphate + H(+). The enzyme catalyses dITP + H2O = dIMP + diphosphate + H(+). It carries out the reaction ITP + H2O = IMP + diphosphate + H(+). In terms of biological role, pyrophosphatase that catalyzes the hydrolysis of nucleoside triphosphates to their monophosphate derivatives, with a high preference for the non-canonical purine nucleotides XTP (xanthosine triphosphate), dITP (deoxyinosine triphosphate) and ITP. Seems to function as a house-cleaning enzyme that removes non-canonical purine nucleotides from the nucleotide pool, thus preventing their incorporation into DNA/RNA and avoiding chromosomal lesions. The protein is dITP/XTP pyrophosphatase of Tropheryma whipplei (strain TW08/27) (Whipple's bacillus).